We begin with the raw amino-acid sequence, 486 residues long: MATFKDACYYYKRLNKLNHAVLKLGVNDAWRPSPPTKYKGWCLDCCQHTDLTYCRGCSIYHVCQWCNQYGRCFLDDEPHLLRMRTFKNNVTKEDLANLIDMYNVLFPVNQKTVNKFINNTKQHKCRNEYVPQWYNHLLMPITLQSLSIELDGDTYYIFGYYDNMKNINQTPFSFVNLIDMYDKLLLDDVNFNRMSFLPLILQQEYALRYFSKSRFISEEKRQINHSHFSINILENLHNPNFKIQITRNCSTMSVRWNEACKLVKDVGTYFDILKTSHVEFYDVSPRCRMFTQHKLKAVSKVIKPNYVTSNHRALATEVHNCRWCSVNNNLIVWNDFRLRNICDNILNFIRALIKSNTGIGHCSSQERIHIYIRDVFDVCDESKWNASVVGIFNCLEPVELGNAHYILLNHEVNWDVANVLIQNIGKIPQILTLNDVITALHSMIYDWFDVRYMRNTPTTTFTVDKLKQLCARRKTVDYDSGVSDVE.

Positions 1 to 81 are RNA-binding; that stretch reads MATFKDACYY…CFLDDEPHLL (81 aa). Residues 42–79 form a zinc-binding domain region; that stretch reads CLDCCQHTDLTYCRGCSIYHVCQWCNQYGRCFLDDEPH. An important for cytoskeleton localization region spans residues 82-176; sequence RMRTFKNNVT…INQTPFSFVN (95 aa). An interaction with host IRF3 region spans residues 317–486; the sequence is EVHNCRWCSV…DYDSGVSDVE (170 aa). Residues 479 to 483 carry the IKBKB-like degron (ILD) motif motif; it reads DSGVS. The pLxIS motif motif lies at 480–483; that stretch reads SGVS.

Belongs to the rotavirus NSP1 family. As to quaternary structure, interacts (via C-terminus) with host IRF3; this interaction leads to IRF3 degradation. Interacts with host IRF7; this interaction leads to IRF7 degradation. Interacts with host CUL1 and CUL3. Interacts with host BTRC. The C-terminal region is phosphorylated by host CKII/CSNK2A1. Phosphorylation of the DSGXS motif is essential for host NF-kappa-B inhibition.

The protein resides in the host cytoplasm. It is found in the host cytoskeleton. Its function is as follows. Plays a role in the inhibition of host innate immunity by inducing the degradation of key host factors required to activate interferon production such as IRF3, IRF5 or IRF7. Associates with components of cullin RING ligases (CRLs) including CUL1 or CUL3, which are essential multisubunit ubiquitination complexes, to modulate their activities. Recognizes the host NF-kappa-B regulator BTRC through the presence of a DSGXS motif in the C-terminal substrate recognition domain. This Sus scrofa (Pig) protein is Non-structural protein 1.